Here is a 130-residue protein sequence, read N- to C-terminus: L-aspartate semialdehyde sulfurtransferase iron-sulfur subunit (130 aa).

4Fe-4S ferredoxin-type domains lie at 72 to 101 and 102 to 130; these read RPIH…FDET and WSLC…KLGE. Residues cysteine 81, cysteine 84, cysteine 87, cysteine 91, cysteine 111, cysteine 114, cysteine 117, and cysteine 121 each coordinate [4Fe-4S] cluster.

As to quaternary structure, may form a complex with MA_1821. The cofactor is [4Fe-4S] cluster.

It functions in the pathway amino-acid biosynthesis. In terms of biological role, required for O-acetylhomoserine sulfhydrylase (OAHS)-independent homocysteine (Hcy) biosynthesis. Together with MA_1821, catalyzes the condensation of sulfide with aspartate semialdehyde to generate homocysteine. May be involved in the reduction of the disulfide formed in MA_1821. This Methanosarcina acetivorans (strain ATCC 35395 / DSM 2834 / JCM 12185 / C2A) protein is L-aspartate semialdehyde sulfurtransferase iron-sulfur subunit.